Here is a 342-residue protein sequence, read N- to C-terminus: MKEIVRALEGYGPPKDKAAEQCGWQAGGALCPGGLCCSQYGWCANTPEYCGSGCQSQCDGGVGGEGGCVDLGCANTPEYCGSGCQSQCDGGVGGEGGCVDLGSIISRSTFEEMLKHRNNAACPAKGFYTYDAFISAAKAFPAFGTTGDVDTCKREIAAFFGQTSHATTGGWPTAPDGPYAWGYCHKEELNQASSYCSPSPAYPCAPGKKYYGRGPIQLSWNYGQCGQALGLDLLNNPDLVATDRVISFKAAIWFWMTPQFPKPSCHDVITGQWSPTGHDISAGRAPGYGVITNIINGGLECGRGWDARVEDRIGFYKRYCDMFGVGYGSNLDCYNQTPFGLG.

The N-terminal stretch at 1 to 19 (MKEIVRALEGYGPPKDKAA) is a signal peptide. Residues 20 to 60 (EQCGWQAGGALCPGGLCCSQYGWCANTPEYCGSGCQSQCDG) form the Chitin-binding type-1 domain. Disulfide bonds link cysteine 22–cysteine 37, cysteine 31–cysteine 43, cysteine 36–cysteine 80, cysteine 84–cysteine 88, cysteine 122–cysteine 184, cysteine 196–cysteine 204, and cysteine 301–cysteine 333.

Belongs to the glycosyl hydrolase 19 family. Chitinase class I subfamily.

In terms of biological role, inactive chitinase-like protein that does not exhibit hydrolytic activity toward chitin. Binds strongly to chitin and possesses antifungal activity toward the fungal pathogen Altenaria alternata in plate assays. Probably involved in defense against fungal pathogens through a mechanism that only involves carbohydrate binding. The chain is Inactive chitinase-like protein 2 from Hevea brasiliensis (Para rubber tree).